A 600-amino-acid chain; its full sequence is Arginine--tRNA ligase (600 aa).

The short motif at 123 to 133 (PNVAKPMHVGH) is the 'HIGH' region element.

Belongs to the class-I aminoacyl-tRNA synthetase family. Monomer.

The protein resides in the cytoplasm. The catalysed reaction is tRNA(Arg) + L-arginine + ATP = L-arginyl-tRNA(Arg) + AMP + diphosphate. The sequence is that of Arginine--tRNA ligase from Caulobacter vibrioides (strain NA1000 / CB15N) (Caulobacter crescentus).